Reading from the N-terminus, the 193-residue chain is Thymidine kinase (193 aa).

Residue 9-16 (AAMNAGKS) coordinates ATP.

The protein belongs to the thymidine kinase family.

The catalysed reaction is thymidine + ATP = dTMP + ADP + H(+). Its function is as follows. This thymidine kinase is one of the enzymes that catalyze DNA precursor synthesis. Although tk is a nonessential gene, some strains of host E.coli do not support the growth of phages that lack this gene. The sequence is that of Thymidine kinase (TK) from Escherichia coli (Bacteriophage T4).